Here is a 1538-residue protein sequence, read N- to C-terminus: Phenolphthiocerol/phthiocerol polyketide synthase subunit B (1538 aa).

The region spanning 33–455 is the Ketosynthase family 3 (KS3) domain; it reads AEPVAVVGIG…GTNAHVIIEQ (423 aa). Residues Cys205, His340, and His377 each act as for beta-ketoacyl synthase activity in the active site. Residues 553–882 form an acyltransferase region; that stretch reads DGSPGPGTVF…TNLYTADIAH (330 aa). The For malonyltransferase activity role is filled by Ser649. 1153 to 1196 contacts NADP(+); that stretch reads SQLVIGATGNIGPHLIRQLARMGAKTIVAMARKPGALDELTQCL. The tract at residues 1153–1328 is beta-ketoacyl reductase; it reads SQLVIGATGN…TVVDWGLWKS (176 aa). Positions 1423–1498 constitute a Carrier domain; the sequence is DMLFDHVGAL…SLTDYLATVL (76 aa). At Ser1458 the chain carries O-(pantetheine 4'-phosphoryl)serine.

NADP(+) is required as a cofactor. Requires pantetheine 4'-phosphate as cofactor.

It catalyses the reaction icosanoyl-[(phenol)carboxyphthiodiolenone synthase] + 2 (S)-methylmalonyl-CoA + 3 malonyl-CoA + 5 NADPH + 10 H(+) = C32-carboxyphthiodiolenone-[(phenol)carboxyphthiodiolenone synthase] + 5 CO2 + 5 NADP(+) + 5 CoA + 2 H2O. The enzyme catalyses docosanoyl-[(phenol)carboxyphthiodiolenone synthase] + 2 (S)-methylmalonyl-CoA + 3 malonyl-CoA + 5 NADPH + 10 H(+) = C34-carboxyphthiodiolenone-[(phenol)carboxyphthiodiolenone synthase] + 5 CO2 + 5 NADP(+) + 5 CoA + 2 H2O. The catalysed reaction is 17-(4-hydroxyphenyl)heptadecanoyl-[(phenol)carboxyphthiodiolenone synthase] + 2 (S)-methylmalonyl-CoA + 3 malonyl-CoA + 5 NADPH + 10 H(+) = C35-(phenol)carboxyphthiodiolenone-[(phenol)carboxyphthiodiolenone synthase] + 5 CO2 + 5 NADP(+) + 5 CoA + 2 H2O. It carries out the reaction 19-(4-hydroxyphenyl)nonadecanoyl-[(phenol)carboxyphthiodiolenone synthase] + 2 (S)-methylmalonyl-CoA + 3 malonyl-CoA + 5 NADPH + 10 H(+) = C37-(phenol)carboxyphthiodiolenone-[(phenol)carboxyphthiodiolenone synthase] + 5 CO2 + 5 NADP(+) + 5 CoA + 2 H2O. The protein operates within lipid metabolism; fatty acid biosynthesis. Its function is as follows. Part of the PpsABCDE complex involved in the biosynthesis of the lipid core common to phthiocerols and phenolphthiocerols by successive additions of malonyl-CoA or methylmalonyl-CoA extender units. PpsA can accept as substrate the activated forms of either icosanoyl (C20), docosanoyl (C22) or lignoceroyl (C24) groups from FadD26, or a (4-hydroxyphenyl)-C17 or (4-hydroxyphenyl)-C19 fatty acyl from FadD29. PpsA initiates the biosynthesis and extends its substrate using a malonyl-CoA extender unit. The PpsB and PpsC proteins add the second and third malonyl-CoA extender units. PpsD adds an (R)-methylmalonyl unit and PpsE adds a second (R)-methylmalonyl unit. The incorporation of the methylmalonyl units results in formation of two branched methyl groups in the elongated product. This chain is Phenolphthiocerol/phthiocerol polyketide synthase subunit B (ppsB), found in Mycobacterium tuberculosis (strain CDC 1551 / Oshkosh).